The chain runs to 140 residues: Cytochrome B5 isoform D (140 aa).

One can recognise a Cytochrome b5 heme-binding domain in the interval 5–81 (GKVFTLSEVS…LDEYYVGDID (77 aa)). His40 and His64 together coordinate heme. Residues 109-129 (FVIKLLQFLVPLLILGLAFGI) form a helical membrane-spanning segment.

Belongs to the cytochrome b5 family. Interacts with CER1, BI-1, FAH1 and FAH2. Expressed in roots, stems, leaves, flowers and siliques.

The protein resides in the endoplasmic reticulum membrane. Its function is as follows. Membrane bound hemoprotein which function as an electron carrier for several membrane bound oxygenases, including fatty acid desaturases. The chain is Cytochrome B5 isoform D from Arabidopsis thaliana (Mouse-ear cress).